The following is a 650-amino-acid chain: Pentatricopeptide repeat-containing protein At2g41080 (650 aa).

12 PPR repeats span residues 43 to 77 (NTSL…GFSS), 78 to 112 (DKFI…NYMS), 114 to 139 (NILI…MPDR), 140 to 174 (KLTT…GFSP), 175 to 209 (DEYT…GLEL), 210 to 240 (DLVV…MPVR), 241 to 275 (NLVA…GCRP), 276 to 310 (NKIT…GASS), 311 to 341 (VVAV…REDE), 342 to 372 (DEVM…MAEQ), 378 to 413 (NEVA…GFKP), and 414 to 444 (GLKH…MPIK). Residues 449-524 (IWKTLLSACN…EAGISWFEHK (76 aa)) are type E motif. The tract at residues 525–555 (GEVHQFKMGDRSQSKSKEIYSYLKELTLEMK) is type E(+) motif. The type DYW motif stretch occupies residues 556–650 (LKGYKPDTAS…NGKCSCGDYW (95 aa)).

Belongs to the PPR family. PCMP-H subfamily.

The polypeptide is Pentatricopeptide repeat-containing protein At2g41080 (PCMP-H29) (Arabidopsis thaliana (Mouse-ear cress)).